The chain runs to 1491 residues: Chromosome partition protein MukB (1491 aa).

34 to 41 (GGNGAGKS) serves as a coordination point for ATP. Coiled-coil stretches lie at residues 302–418 (LIEQ…QYQQ), 488–600 (EVAR…RFES), 638–666 (ELEKAQSMAKDKLAERRAKLDSEIERLAS), 781–806 (RAAREQRLELLREERDDVVEQHAKAS), 836–1109 (EQAL…DLRT), and 1210–1239 (VEAIEEMEVELARLTEELTQREQRLAISSD). The tract at residues 667–784 (PGGSNDPRLK…AIPLFGRAAR (118 aa)) is flexible hinge. The interval 1059–1080 (QRRRDELQERLHTSRSRKSEYE) is disordered.

Belongs to the SMC family. MukB subfamily. Homodimerization via its hinge domain. Binds to DNA via its C-terminal region. Interacts, and probably forms a ternary complex, with MukE and MukF via its C-terminal region. The complex formation is stimulated by calcium or magnesium. Interacts with tubulin-related protein FtsZ.

Its subcellular location is the cytoplasm. It is found in the nucleoid. In terms of biological role, plays a central role in chromosome condensation, segregation and cell cycle progression. Functions as a homodimer, which is essential for chromosome partition. Involved in negative DNA supercoiling in vivo, and by this means organize and compact chromosomes. May achieve or facilitate chromosome segregation by condensation DNA from both sides of a centrally located replisome during cell division. This chain is Chromosome partition protein MukB, found in Vibrio cholerae serotype O1 (strain ATCC 39541 / Classical Ogawa 395 / O395).